Reading from the N-terminus, the 295-residue chain is MQNALQKYYDFLRIERRLSPYTLTNYRRQLSAVTELLTQNGIRSWQQVTPSVVRFILAESRKAGLHEKSLALRLSALRQFLAYLVVQEELKVNPATGISAPKQGKYLPKNIDQEQIGKLLDNRSNEPIDIRDRAMLELMYSSGLRLSELHGLDLNHVNLQSREVRVLGKGSKERILPVGHQALDAVLDWLQVRLRFNPKDNALFVSSQGGRLTPRAIQKRMEIWGVKQGLSTHLNPHKLRHSFATHMLEASADLRAVQELLGHSNLATTQIYTHLDFKHLTDVYDQAHPRAKRKG.

Residues 1–85 enclose the Core-binding (CB) domain; that stretch reads MQNALQKYYD…ALRQFLAYLV (85 aa). The Tyr recombinase domain maps to 106 to 285; sequence YLPKNIDQEQ…DFKHLTDVYD (180 aa). Residues Arg145, Lys169, His237, Arg240, and His263 contribute to the active site. The active-site O-(3'-phospho-DNA)-tyrosine intermediate is Tyr272.

Belongs to the 'phage' integrase family. XerC subfamily. Forms a cyclic heterotetrameric complex composed of two molecules of XerC and two molecules of XerD.

The protein resides in the cytoplasm. Its function is as follows. Site-specific tyrosine recombinase, which acts by catalyzing the cutting and rejoining of the recombining DNA molecules. The XerC-XerD complex is essential to convert dimers of the bacterial chromosome into monomers to permit their segregation at cell division. It also contributes to the segregational stability of plasmids. This chain is Tyrosine recombinase XerC, found in Actinobacillus succinogenes (strain ATCC 55618 / DSM 22257 / CCUG 43843 / 130Z).